A 131-amino-acid chain; its full sequence is Small ribosomal subunit protein uS19 (131 aa).

This sequence belongs to the universal ribosomal protein uS19 family.

Protein S19 forms a complex with S13 that binds strongly to the 16S ribosomal RNA. The polypeptide is Small ribosomal subunit protein uS19 (Cenarchaeum symbiosum (strain A)).